The chain runs to 422 residues: Exodeoxyribonuclease 7 large subunit (422 aa).

It belongs to the XseA family. As to quaternary structure, heterooligomer composed of large and small subunits.

The protein resides in the cytoplasm. The catalysed reaction is Exonucleolytic cleavage in either 5'- to 3'- or 3'- to 5'-direction to yield nucleoside 5'-phosphates.. Functionally, bidirectionally degrades single-stranded DNA into large acid-insoluble oligonucleotides, which are then degraded further into small acid-soluble oligonucleotides. This Leptospira borgpetersenii serovar Hardjo-bovis (strain JB197) protein is Exodeoxyribonuclease 7 large subunit.